The primary structure comprises 180 residues: Stathmin-3 (180 aa).

S-palmitoyl cysteine attachment occurs at residues cysteine 22 and cysteine 24. The region spanning 38-180 is the SLD domain; sequence GDMEVKQLDK…NKEQREEMSG (143 aa). A phosphoserine mark is found at serine 50, serine 60, serine 65, serine 68, serine 72, serine 73, and serine 81. The span at 60–74 shows a compositional bias: low complexity; sequence SPSDLSPESPVLSSP. Residues 60–81 form a disordered region; that stretch reads SPSDLSPESPVLSSPPKRKDAS. Residues 75–179 are a coiled coil; it reads PKRKDASLEE…RNKEQREEMS (105 aa).

It belongs to the stathmin family. In terms of assembly, interacts with STAT3. Interacts with CLU (secreted form); this interaction may act as an important modulator during neuronal differentiation. Post-translationally, N-terminal palmitoylation promotes specific anchoring to the cytosolic leaflet of Golgi membranes and subsequent vesicular trafficking along dendrites and axons. Neuronal Stathmins are substrates for palmitoyltransferases ZDHHC3, ZDHHC7 and ZDHHC15. In terms of tissue distribution, neuron specific.

Its subcellular location is the golgi apparatus. The protein localises to the cell projection. It is found in the growth cone. The protein resides in the axon. It localises to the cytoplasm. Its subcellular location is the cytosol. Functionally, exhibits microtubule-destabilizing activity, which is antagonized by STAT3. The chain is Stathmin-3 (Stmn3) from Mus musculus (Mouse).